A 583-amino-acid chain; its full sequence is MRTHFCGLVDETLIGQTVTLAGWTDVARNQGGVCFIDLRDHEGIVQVTVEVDNAEVFAVAASLGYEDVLQVEGVVRARHAVNDKMRTGKVEVIATAITVLNKAAPLPFHAHENPGEETRLKYRYLDLRRPEMQRMQRTRIKLVQALRRHLDEKGFQDIETPILTKATPEGARDFLVPARMHPGEFYALPQSPQLFKQILMVAGFDRYYQIARCFRDEALRADRQLEFTQLDMEFAFVRERDVQDFVEDMIRGIFKEVVNVELDASFPRMTWAEAMRRYGSDKPDLRIALELVDVAELVKNSEFPVFTGPANDADGRVAALRIPGGASLSRKQIDEYAAHAAKYGAKGLAYIKIADNGEVSSPIQKFFSEESFAALVAHVGAGNGDIVFFGAGGYNKVSDFMGALRLKAGKDFGLVADGWAPLWVTDFPMFEWDEEEQRYVALHHPFTAPAVDDIADLRANARTAVSRGYDMVLNGNEIGGGSIRIHRPDMQSAVFELLGIGAEEARAKFGFLLDALNYGAPPHGGIAFGIDRIAALMAGTESIRDVIPFPKTTGAQDLMTDAPSPIVDAQLAEVHIQVRPKTN.

E169 contacts L-aspartate. The aspartate stretch occupies residues 193 to 196 (QLFK). R215 contributes to the L-aspartate binding site. ATP contacts are provided by residues 215 to 217 (RDE) and Q224. Residue H443 participates in L-aspartate binding. Residue E477 participates in ATP binding. Position 484 (R484) interacts with L-aspartate. 529–532 (GIDR) serves as a coordination point for ATP.

This sequence belongs to the class-II aminoacyl-tRNA synthetase family. Type 1 subfamily. As to quaternary structure, homodimer.

It is found in the cytoplasm. The enzyme catalyses tRNA(Asp) + L-aspartate + ATP = L-aspartyl-tRNA(Asp) + AMP + diphosphate. Catalyzes the attachment of L-aspartate to tRNA(Asp) in a two-step reaction: L-aspartate is first activated by ATP to form Asp-AMP and then transferred to the acceptor end of tRNA(Asp). The protein is Aspartate--tRNA ligase of Stenotrophomonas maltophilia (strain R551-3).